The following is a 208-amino-acid chain: Cytochrome c oxidase assembly protein CtaG (208 aa).

The Cytoplasmic portion of the chain corresponds to 1 to 19 (MKQRPTGPDTTPRNRRGFG). The chain crosses the membrane as a helical; Signal-anchor for type II membrane protein span at residues 20–42 (RDTAVASVCGLVVALMVGASYAA). The Periplasmic portion of the chain corresponds to 43 to 208 (VPFYNWFCRV…SEAGPRQGAL (166 aa)).

This sequence belongs to the COX11/CtaG family.

The protein resides in the cell inner membrane. Functionally, exerts its effect at some terminal stage of cytochrome c oxidase synthesis, probably by being involved in the insertion of the copper B into subunit I. The polypeptide is Cytochrome c oxidase assembly protein CtaG (Rhodopseudomonas palustris (strain BisA53)).